A 1153-amino-acid polypeptide reads, in one-letter code: uncharacterized protein (1153 aa).

The signal sequence occupies residues 1-18 (MNKNIFITLLISLLLLSG). A lipid anchor (N-palmitoyl cysteine) is attached at Cys19. Cys19 carries the S-diacylglycerol cysteine lipid modification. Transmembrane regions (helical) follow at residues 289-309 (VSAI…IGNI), 393-413 (LGFI…FLIF), 422-442 (ALIT…FMLF), and 457-477 (ISYA…SMII).

Belongs to the TrbL/VirB6 family.

Its subcellular location is the cell membrane. This is an uncharacterized protein from Rickettsia conorii (strain ATCC VR-613 / Malish 7).